The chain runs to 70 residues: ATP synthase subunit epsilon, mitochondrial (70 aa).

This sequence belongs to the eukaryotic ATPase epsilon family. In terms of assembly, F-type ATPases have 2 components, CF(1) - the catalytic core - and CF(0) - the membrane proton channel. CF(1) has five subunits: alpha(3), beta(3), gamma(1), delta(1), epsilon(1). CF(0) has three main subunits: a, b and c.

The protein localises to the mitochondrion. Its subcellular location is the mitochondrion inner membrane. Functionally, mitochondrial membrane ATP synthase (F(1)F(0) ATP synthase or Complex V) produces ATP from ADP in the presence of a proton gradient across the membrane which is generated by electron transport complexes of the respiratory chain. F-type ATPases consist of two structural domains, F(1) - containing the extramembraneous catalytic core, and F(0) - containing the membrane proton channel, linked together by a central stalk and a peripheral stalk. During catalysis, ATP synthesis in the catalytic domain of F(1) is coupled via a rotary mechanism of the central stalk subunits to proton translocation. Part of the complex F(1) domain and of the central stalk which is part of the complex rotary element. Rotation of the central stalk against the surrounding alpha(3)beta(3) subunits leads to hydrolysis of ATP in three separate catalytic sites on the beta subunits. The chain is ATP synthase subunit epsilon, mitochondrial from Zea mays (Maize).